Consider the following 146-residue polypeptide: DNA-directed RNA polymerase subunit beta (146 aa).

The protein belongs to the RNA polymerase beta chain family. As to quaternary structure, the RNAP catalytic core consists of 2 alpha, 1 beta, 1 beta' and 1 omega subunit. When a sigma factor is associated with the core the holoenzyme is formed, which can initiate transcription.

It carries out the reaction RNA(n) + a ribonucleoside 5'-triphosphate = RNA(n+1) + diphosphate. DNA-dependent RNA polymerase catalyzes the transcription of DNA into RNA using the four ribonucleoside triphosphates as substrates. The sequence is that of DNA-directed RNA polymerase subunit beta (rpoB) from Liberibacter africanus (Citrus greening disease).